A 404-amino-acid polypeptide reads, in one-letter code: MKMEEAVGKVEELIESEAPPKASEQETAKEEDGSVELESQVQKDGVADSTVISSMPCLLMELRRDSSESQLASTESDKPTTGRVYESDSSNHCMLSPSSSGHLADSDTLSSAEENEPSQAETAVEGDPSGVSGATVGRKSRRSRSESETSTMAAKKNRQSSDKQNGRVAKVKGHRSQKHKERIRLLRQKREAAARKKYNLLQDSSTSDSDLTCDSSTSSSDDDEEVSGSSKTITAEIPDGPPVVAHYDMSDTNSDPEVVNVDNLLAAAVVQEHSNSVGGQDTGATWRTSGLLEELNAEAGHLDPGFLASDKTSAGNAPLNEEINIASSDSEVEIVGVQEHARCVHPRGGVIQSVSSWKHGSGTQYVSTRQTQSWTAVTPQQTWASPAEVVDLTLDEDSRRKYLL.

Basic and acidic residues-rich tracts occupy residues 1-12 (MKMEEAVGKVEE) and 23-32 (SEQETAKEED). Disordered regions lie at residues 1 to 50 (MKME…ADST) and 63 to 255 (RRDS…TNSD). S66 is modified (phosphoserine). S67 bears the Phosphoserine; by AMPK mark. The segment covering 87–121 (SDSSNHCMLSPSSSGHLADSDTLSSAEENEPSQAE) has biased composition (polar residues). S143, S145, and S147 each carry phosphoserine. Over residues 169–187 (AKVKGHRSQKHKERIRLLR) the composition is skewed to basic residues. A coiled-coil region spans residues 175–200 (RSQKHKERIRLLRQKREAAARKKYNL). The interval 202–226 (QDSSTSDSDLTCDSSTSSSDDDEEV) is required for interaction with CSNK2B. Over residues 203–219 (DSSTSDSDLTCDSSTSS) the composition is skewed to low complexity. S327, S328, and S330 each carry phosphoserine. Residue R347 is modified to Omega-N-methylarginine. K358 participates in a covalent cross-link: Glycyl lysine isopeptide (Lys-Gly) (interchain with G-Cter in SUMO2).

Interacts with CSNK2B (via KSSR). Interacts with JUN; the interaction is mediated by CSNK2B. Phosphorylated at Ser-67 by AMPK. In skeletal muscle, phosphorylation is induced by exercise and seems to increase muscle contractile function. In terms of tissue distribution, expressed in skeletal muscle.

The protein localises to the nucleus. In terms of biological role, AMPK substrate important for exercise capacity and skeletal muscle function. Required for normal contraction-induced signaling. (Microbial infection) Upon Epstein-Barr virus (EBV) infection, suppresses viral BZLF1 expression and subsequent EBV reactivation by interacting with JUN and inhibiting its transcriptional activator activity on BZLF1 Z promoter. The chain is Protein ARK2N from Homo sapiens (Human).